The following is a 417-amino-acid chain: D-glycerate 2-kinase (417 aa).

It belongs to the glycerate kinase type-1 family. In terms of assembly, homodimer. It depends on Mg(2+) as a cofactor.

The enzyme catalyses (R)-glycerate + ATP = (2R)-2-phosphoglycerate + ADP + H(+). Involved in the degradation of serine via 3-hydroxypyruvate. Catalyzes the ATP-dependent phosphorylation of D-glycerate to 2-phosphoglycerate. The sequence is that of D-glycerate 2-kinase from Thermotoga maritima (strain ATCC 43589 / DSM 3109 / JCM 10099 / NBRC 100826 / MSB8).